We begin with the raw amino-acid sequence, 512 residues long: Inositol-3-phosphate synthase (512 aa).

Residues G72, G73, N74, N75, D145, I182, Q192, R195, T232, G233, N234, T235, G283, S284, D308, S311, N342, N343, D344, K357, G395, D396, D424, and S425 each coordinate NAD(+).

This sequence belongs to the myo-inositol 1-phosphate synthase family. Requires NAD(+) as cofactor.

The protein resides in the cytoplasm. It is found in the cytosol. It localises to the nucleus. The catalysed reaction is D-glucose 6-phosphate = 1D-myo-inositol 3-phosphate. It functions in the pathway polyol metabolism; myo-inositol biosynthesis; myo-inositol from D-glucose 6-phosphate: step 1/2. Its function is as follows. Key enzyme in myo-inositol biosynthesis pathway that catalyzes the conversion of glucose 6-phosphate to 1-myo-inositol 1-phosphate in a NAD-dependent manner. In Mesembryanthemum crystallinum (Common ice plant), this protein is Inositol-3-phosphate synthase.